Reading from the N-terminus, the 192-residue chain is Immunity protein YqcF (192 aa).

In terms of assembly, probably interacts with cognate toxin YqcG but not with other non-cognate toxins. The interaction inhibits the toxic activity of YqcG.

The protein resides in the cytoplasm. Functionally, immunity component of one of 6 LXG toxin-immunity modules in this strain. They promote kin selection, mediate competition in biofilms, and drive spatial segregation of different strains, indicating that LXG toxins may help avoid warfare between strains in biofilms. Mediates intercellular competition during biofilm formation; disruption of the operon disadvantages the bacteria, but overexpression of the cognate immunity protein restores growth in competition with wild-type. In situ neutralizes the toxic effect of cognate toxin YqcG. Neutralizes the toxic activity of cognate toxin YqcG upon expression in E.coli. Does not have immunity protein activity on other LXG toxins. The polypeptide is Immunity protein YqcF (yqcF) (Bacillus subtilis (strain 168)).